The primary structure comprises 430 residues: Pyrroloquinoline quinone-dependent sugar dehydrogenase (430 aa).

A signal peptide spans 1-23 (MARLAPHTLLLALFVFLFGSCTA). N-linked (GlcNAc...) asparagine glycosylation occurs at Asn-25. Arg-57 provides a ligand contact to pyrroloquinoline quinone. N-linked (GlcNAc...) asparagine glycosylation is found at Asn-94 and Asn-147. His-153 contacts pyrroloquinoline quinone. An N-linked (GlcNAc...) asparagine glycan is attached at Asn-184. Arg-220 is a binding site for pyrroloquinoline quinone. Ca(2+) is bound by residues Ser-240 and Asp-242. A disulfide bridge links Cys-281 with Cys-316. The N-linked (GlcNAc...) asparagine glycan is linked to Asn-306. Position 330 (His-330) interacts with pyrroloquinoline quinone. An N-linked (GlcNAc...) asparagine glycan is attached at Asn-341. His-350 serves as a coordination point for pyrroloquinoline quinone. Cysteines 388 and 392 form a disulfide.

Belongs to the sugar dehydrogenase AA12 family. It depends on Ca(2+) as a cofactor. Requires pyrroloquinoline quinone as cofactor.

Its subcellular location is the secreted. Pyrroloquinoline quinone (PPQ)-dependent oxidoreductase that catalyzes the oxidation of various sugars such as L-fucose. In Hypocrea jecorina (strain QM6a) (Trichoderma reesei), this protein is Pyrroloquinoline quinone-dependent sugar dehydrogenase.